We begin with the raw amino-acid sequence, 327 residues long: Acetyl-coenzyme A carboxylase carboxyl transferase subunit beta (327 aa).

Positions 24-293 constitute a CoA carboxyltransferase N-terminal domain; the sequence is LWIKCPDTGQ…LTVTTAVEAP (270 aa). Low complexity predominate over residues 293–311; sequence PAEAAAKAEPEATTTEQPV. Residues 293–327 are disordered; it reads PAEAAAKAEPEATTTEQPVAPAPTEPPAQPAAPQA. The segment covering 312–327 has biased composition (pro residues); it reads APAPTEPPAQPAAPQA.

Belongs to the AccD/PCCB family. Acetyl-CoA carboxylase is a heterohexamer composed of biotin carboxyl carrier protein (AccB), biotin carboxylase (AccC) and two subunits each of ACCase subunit alpha (AccA) and ACCase subunit beta (AccD).

It localises to the cytoplasm. The catalysed reaction is N(6)-carboxybiotinyl-L-lysyl-[protein] + acetyl-CoA = N(6)-biotinyl-L-lysyl-[protein] + malonyl-CoA. Its pathway is lipid metabolism; malonyl-CoA biosynthesis; malonyl-CoA from acetyl-CoA: step 1/1. Its function is as follows. Component of the acetyl coenzyme A carboxylase (ACC) complex. Biotin carboxylase (BC) catalyzes the carboxylation of biotin on its carrier protein (BCCP) and then the CO(2) group is transferred by the transcarboxylase to acetyl-CoA to form malonyl-CoA. In Rhodopseudomonas palustris (strain TIE-1), this protein is Acetyl-coenzyme A carboxylase carboxyl transferase subunit beta.